The sequence spans 2766 residues: PDZ domain-containing protein 2 (2766 aa).

Residues 85 to 177 enclose the PDZ 1 domain; the sequence is LSFGNIPVFG…GGFIYLIMLR (93 aa). Disordered regions lie at residues 189-315 and 419-452; these read GNSG…KTGK and MPGS…KLKS. Residues 242–254 are compositionally biased toward acidic residues; it reads TADDPNSELENGA. Residues 280-296 are compositionally biased toward basic and acidic residues; that stretch reads HLERSEADSEVELRVPK. The 86-residue stretch at 334 to 419 folds into the PDZ 2 domain; the sequence is KMELLKESDG…MVQLVVASKM (86 aa). Serine 517 carries the phosphoserine modification. In terms of domain architecture, PDZ 3 spans 535–621; sequence IIGLYKEKGK…GLFVLTVRTK (87 aa). The span at 627-636 shows a compositional bias: polar residues; it reads LTPCSTPTHM. The disordered stretch occupies residues 627–673; sequence LTPCSTPTHMSRSSSPSFNTNSGGTPAGGGQEEGGSSSLGRKAPGPK. Residues 637-650 show a composition bias toward low complexity; it reads SRSSSPSFNTNSGG. The region spanning 679–764 is the PDZ 4 domain; the sequence is EVTLNKEPRV…GPVRLVIGRH (86 aa). The segment covering 783-794 has biased composition (polar residues); it reads YQESREANSSPG. 2 disordered regions span residues 783 to 803 and 834 to 853; these read YQES…KSPS and AGSE…EDGS. Serine 891 and serine 895 each carry phosphoserine. 10 disordered regions span residues 915 to 966, 990 to 1425, 1456 to 1531, 1725 to 1909, 1924 to 1967, 2015 to 2070, 2146 to 2174, 2262 to 2397, 2424 to 2450, and 2465 to 2496; these read NGGS…KQEE, HSIL…PSVL, ISLS…CPGT, DSQG…LPEQ, DTSC…IRQS, ERVP…ASQV, FSSH…AMGG, DRPT…ERRT, QLEI…GHAD, and TRAY…WATP. The segment covering 918–927 has biased composition (acidic residues); it reads SDDEDFDGEG. The segment covering 1021–1038 has biased composition (basic and acidic residues); that stretch reads GRKEMSGSRSSPKLEYRV. Composition is skewed to polar residues over residues 1040-1061, 1126-1137, and 1189-1220; these read TDTQ…SENL, PGDSSVPTNCGP, and SETP…SQGI. Composition is skewed to low complexity over residues 1379–1393 and 1456–1471; these read SQPP…SHHA and ISLS…SPSS. At serine 1767 the chain carries Phosphoserine. Basic residues predominate over residues 1797–1806; sequence CSPKLKRLNS. Residues 1884 to 1901 are compositionally biased toward polar residues; that stretch reads LRTSASDTSIRTFTSPLT. 2 stretches are compositionally biased toward low complexity: residues 1924–1937 and 1947–1963; these read DTSC…PRSG and SGSA…ALAG. 2 stretches are compositionally biased toward low complexity: residues 2280–2296 and 2305–2321; these read PPIN…GSPS and RSLS…SSLL. 2 stretches are compositionally biased toward polar residues: residues 2322–2347 and 2362–2372; these read PQMT…SNKG and PTSTVSPASPS. The 85-residue stretch at 2550–2634 folds into the PDZ 5 domain; the sequence is FIVLNKKEGS…HKHALMIIKK (85 aa). A disordered region spans residues 2635 to 2667; it reads GNDQPGPSFKQEPPSANGKGPFPRRTLPLEPGA. A PDZ 6 domain is found at 2678-2763; the sequence is CVEVLKTSAG…GPVQLVIRKH (86 aa).

Interacts with SCN10A, CTNND2 and PKP4. In terms of processing, a secreted form is produced by caspase-mediated proteolytic cleavage. In terms of tissue distribution, expressed in the heart, liver, brain, spleen, lung, kidney, testis and skeletal muscle.

The protein resides in the nucleus. Its subcellular location is the cytoplasm. The protein localises to the endoplasmic reticulum. It localises to the cell junction. It is found in the secreted. The chain is PDZ domain-containing protein 2 (Pdzd2) from Rattus norvegicus (Rat).